Here is a 343-residue protein sequence, read N- to C-terminus: Thromboxane A2 receptor (343 aa).

Residues 1–29 are Extracellular-facing; that stretch reads MWPNASSLGPCFRPMNITLEERRLIASPW. Asparagine 4 and asparagine 16 each carry an N-linked (GlcNAc...) asparagine glycan. A helical transmembrane segment spans residues 30 to 52; the sequence is FAASFCLVGLASNLLALSVLMGA. Residues 53–66 are Cytoplasmic-facing; the sequence is RQGSSQSRSSFLTF. Residues 67-87 form a helical membrane-spanning segment; the sequence is LCGLVLTDFMGLLVTGAIVVT. Over 88–106 the chain is Extracellular; it reads QHFVLFEWQAVDPGCSLCH. Cysteine 105 and cysteine 183 are oxidised to a cystine. A helical membrane pass occupies residues 107 to 128; that stretch reads FMGVIMVFFGLCPLLLGAAMAS. Over 129–149 the chain is Cytoplasmic; the sequence is ERFLGITRPFSRPATASQRRA. The helical transmembrane segment at 150–172 threads the bilayer; sequence WTTVGLVWASALALGLLPLLGVG. The Extracellular portion of the chain corresponds to 173 to 193; it reads HYTVQYPGSWCFLTLGTDPGD. A helical membrane pass occupies residues 194–219; the sequence is VAFGLLFALLGSISVGMSFLLNTISV. The Cytoplasmic segment spans residues 220–246; the sequence is ATLCHVYHGQATAQQRPRDCEVEMMVQ. Residues 247–270 traverse the membrane as a helical segment; it reads LMGIMVVASICWMPLLVFIAQTVL. At 271–289 the chain is on the extracellular side; sequence QSPPAMSPTGQLSRLTERQ. Residues 290–311 form a helical membrane-spanning segment; that stretch reads LLIYLRVATWNQILDPWVYILF. At 312–343 the chain is on the cytoplasmic side; sequence RRAVIQRFYPRLSTRSRSLSLQPQLTRRSTIH. Phosphoserine is present on residues serine 329 and serine 331.

It belongs to the G-protein coupled receptor 1 family. As to quaternary structure, interacts with RPGRIP1L. Interacts with RACK1; the interaction regulates TBXA2R cell surface expression.

The protein localises to the cell membrane. Receptor for thromboxane A2 (TXA2), a potent stimulator of platelet aggregation. The activity of this receptor is mediated by a G-protein that activates a phosphatidylinositol-calcium second messenger system. In the kidney, the binding of TXA2 to glomerular TP receptors causes intense vasoconstriction. Activates phospholipase C and adenylyl cyclase. This chain is Thromboxane A2 receptor (TBXA2R), found in Bos taurus (Bovine).